A 351-amino-acid chain; its full sequence is DNA polymerase IV (351 aa).

The region spanning 4–185 is the UmuC domain; sequence IIHVDMDCFF…LPLAKIPGVG (182 aa). Mg(2+)-binding residues include D8 and D103. The active site involves E104.

It belongs to the DNA polymerase type-Y family. Monomer. Requires Mg(2+) as cofactor.

Its subcellular location is the cytoplasm. It carries out the reaction DNA(n) + a 2'-deoxyribonucleoside 5'-triphosphate = DNA(n+1) + diphosphate. Poorly processive, error-prone DNA polymerase involved in untargeted mutagenesis. Copies undamaged DNA at stalled replication forks, which arise in vivo from mismatched or misaligned primer ends. These misaligned primers can be extended by PolIV. Exhibits no 3'-5' exonuclease (proofreading) activity. May be involved in translesional synthesis, in conjunction with the beta clamp from PolIII. This chain is DNA polymerase IV, found in Escherichia coli O9:H4 (strain HS).